The sequence spans 590 residues: Pescadillo homolog (590 aa).

One can recognise a BRCT domain in the interval 332 to 422; it reads VCKSLFKDLK…IILPTEKYLV (91 aa). The tract at residues 561–590 is disordered; that stretch reads AMKISQSRKRSGVEIIEQRKKRLNDTQPSS.

It belongs to the pescadillo family. As to quaternary structure, interacts with BOP1 and WDR12. Interacts with NSN1. In terms of tissue distribution, expressed in shoot and root apical meristems, epidermal cells and vasculature of developing leaves, trichome progenitor cells, young flowers, developing pollen grains and ovules, and mature pollen grains.

The protein localises to the nucleus. The protein resides in the nucleolus. Its subcellular location is the nucleoplasm. In terms of biological role, required for maturation of ribosomal RNAs and formation of the large ribosomal subunit. Plays an essential role in cell growth and survival through its regulation of ribosome biogenesis and mitotic progression. Required for normal root cell growth and differentiation. The protein is Pescadillo homolog of Arabidopsis thaliana (Mouse-ear cress).